A 593-amino-acid polypeptide reads, in one-letter code: Transcriptional repressor p66-beta (593 aa).

Ser-17 carries the post-translational modification Phosphoserine. Residues Lys-33, Lys-66, and Lys-97 each participate in a glycyl lysine isopeptide (Lys-Gly) (interchain with G-Cter in SUMO2) cross-link. The segment at 62–123 (ELPTKQDGSG…PERGRLTPSP (62 aa)) is disordered. Basic and acidic residues-rich tracts occupy residues 74–100 (GYEEKLNGNLRPHGDNRTAGRPGKENI) and 108–118 (SARRSEPERGR). Thr-120 carries the post-translational modification Phosphothreonine. Residues Ser-122, Ser-129, Ser-134, and Ser-135 each carry the phosphoserine modification. A coiled-coil region spans residues 140–194 (SRMEERLKAANLEMFKGKGIEERQQLIKQLRDELRLEEARLVLLKKLRQSQLQKE). A Glycyl lysine isopeptide (Lys-Gly) (interchain with G-Cter in SUMO2) cross-link involves residue Lys-147. A CR1; interaction with MBD2 and MBD3 region spans residues 165-195 (LIKQLRDELRLEEARLVLLKKLRQSQLQKEN). Lys-199 participates in a covalent cross-link: Glycyl lysine isopeptide (Lys-Gly) (interchain with G-Cter in SUMO2). Ser-208 carries the phosphoserine modification. The disordered stretch occupies residues 213–235 (SPAHVGQQGLSKLPSRPGAQGVE). Residue Lys-281 forms a Glycyl lysine isopeptide (Lys-Gly) (interchain with G-Cter in SUMO2) linkage. 3 positions are modified to phosphoserine: Ser-333, Ser-338, and Ser-340. Residues 340–480 (SAMTDAANSQ…QEQEIEQRLQ (141 aa)) are CR2; histone tail-binding. Glycyl lysine isopeptide (Lys-Gly) (interchain with G-Cter in SUMO2) cross-links involve residues Lys-353, Lys-454, and Lys-467. The segment at 414–467 (RVEPFVCAQCRTDFTPHWKQEKNGKILCEQCMTSNQKKALKAEHTNRLKNAFVK) adopts a GATA-type zinc-finger fold. Positions 449-482 (QKKALKAEHTNRLKNAFVKALQQEQEIEQRLQQQ) form a coiled coil. The residue at position 486 (Ser-486) is a Phosphoserine. Lys-498 participates in a covalent cross-link: Glycyl lysine isopeptide (Lys-Gly) (interchain with G-Cter in SUMO2).

Homooligomer. Component of the nucleosome remodeling and deacetylase (NuRD) repressor complex, composed of core proteins MTA1, MTA2, MTA3, RBBP4, RBBP7, HDAC1, HDAC2, MBD2, MBD3, and peripherally associated proteins CDK2AP1, CDK2AP2, GATAD2A, GATAD2B, CHD3, CHD4 and CHD5. The exact stoichiometry of the NuRD complex is unknown, and some subunits such as MBD2 and MBD3, GATAD2A and GATAD2B, and CHD3, CHD4 and CHD5 define mutually exclusive NuRD complexes. Interacts with MBD2; this is required for the enhancement of MBD2-mediated repression and for targeting to the chromatin. Interacts with MBD3. Component of the MeCP1 histone deacetylase complex. Interacts with histone tails, including that of histones H2A, H2B, H3 and H4. Interacts with ERCC6. As to expression, widely expressed.

The protein resides in the nucleus speckle. The protein localises to the nucleus. It is found in the chromosome. In terms of biological role, transcriptional repressor. Acts as a component of the histone deacetylase NuRD complex which participates in the remodeling of chromatin. Enhances MBD2-mediated repression. Efficient repression requires the presence of GATAD2A. Targets MBD3 to discrete loci in the nucleus. May play a role in synapse development. The sequence is that of Transcriptional repressor p66-beta (GATAD2B) from Homo sapiens (Human).